We begin with the raw amino-acid sequence, 275 residues long: MLQRSVFFLSDRTGITAETLGHSLLTQFDGIEWKKHYASFLDSAAKAQAVIEQINTIAEQEGQPALVFSTLLDPVMLASIRRADCVLFDFFETCLGTLEAVLQQPPARIPGRSHVLRQDASYFRRIAAIQYALNSDDGANAKILADADVIVVGVSRTGKTPVCVYLALQYGVLAANYPFTPEDMGAIQLPPLLQPLRKKLFGLTLNTSRLQSIREERYPGSHYASFAECQRELQWQNELYRQFDIPSINTTDVSIEEISASIVNRAHLERRQHGT.

153–160 (GVSRTGKT) provides a ligand contact to ADP.

It belongs to the pyruvate, phosphate/water dikinase regulatory protein family. PSRP subfamily.

It catalyses the reaction [pyruvate, water dikinase] + ADP = [pyruvate, water dikinase]-phosphate + AMP + H(+). It carries out the reaction [pyruvate, water dikinase]-phosphate + phosphate + H(+) = [pyruvate, water dikinase] + diphosphate. Its function is as follows. Bifunctional serine/threonine kinase and phosphorylase involved in the regulation of the phosphoenolpyruvate synthase (PEPS) by catalyzing its phosphorylation/dephosphorylation. The polypeptide is Putative phosphoenolpyruvate synthase regulatory protein (Nitrosomonas europaea (strain ATCC 19718 / CIP 103999 / KCTC 2705 / NBRC 14298)).